We begin with the raw amino-acid sequence, 130 residues long: Small ribosomal subunit protein uS11 (130 aa).

It belongs to the universal ribosomal protein uS11 family. In terms of assembly, part of the 30S ribosomal subunit. Interacts with proteins S7 and S18. Binds to IF-3.

Located on the platform of the 30S subunit, it bridges several disparate RNA helices of the 16S rRNA. Forms part of the Shine-Dalgarno cleft in the 70S ribosome. This Prochlorococcus marinus (strain MIT 9312) protein is Small ribosomal subunit protein uS11.